A 243-amino-acid chain; its full sequence is UPF0758 protein PCC7424_2073 (243 aa).

In terms of domain architecture, MPN spans 112 to 235; that stretch reads VEINDPVSAV…HQSLRTVTDL (124 aa). His-184, His-186, and Asp-197 together coordinate Zn(2+). Residues 184-197 carry the JAMM motif motif; that stretch reads HNHPSGNVAPSQED.

This sequence belongs to the UPF0758 family.

The polypeptide is UPF0758 protein PCC7424_2073 (Gloeothece citriformis (strain PCC 7424) (Cyanothece sp. (strain PCC 7424))).